The primary structure comprises 621 residues: (-)-beta-phellandrene synthase 1, chloroplastic (621 aa).

A chloroplast-targeting transit peptide spans Met1 to Arg49. Residues Asp372, Asp376, and Asp524 each contribute to the Mg(2+) site. Positions Asp372–Asp376 match the DDXXD motif motif.

It belongs to the terpene synthase family. Tpsd subfamily. Mg(2+) is required as a cofactor. Requires Mn(2+) as cofactor.

It localises to the plastid. It is found in the chloroplast. The enzyme catalyses (2E)-geranyl diphosphate = (-)-beta-phellandrene + diphosphate. Its pathway is terpene metabolism; oleoresin biosynthesis. The protein operates within secondary metabolite biosynthesis; terpenoid biosynthesis. In terms of biological role, monoterpene synthase (TPS) involved in the biosynthesis of monoterpene natural products included in conifer oleoresin secretions and volatile emissions; these compounds contribute to biotic and abiotic stress defense against herbivores and pathogens. Catalyzes the conversion of (2E)-geranyl diphosphate (GPP) to (-)-beta-phellandrene and, to a lower extent, to (-)-alpha-phellandrene. This is (-)-beta-phellandrene synthase 1, chloroplastic from Pinus contorta (Shore pine).